A 5890-amino-acid polypeptide reads, in one-letter code: MEKEETTRELLLPNWQGSGSHGLTIAQRDDGVFVQEVTQNSPAARTGVVKEGDQIVGATIYFDNLQSGEVTQLLNTMGHHTVGLKLHRKGDRSPEPGQTWTREVFSSCSSEVVLSGDDEEYQRIYTTKIKPRLKSEDGVEGDLGETQSRTITVTRRVTAYTVDVTGREGAKDIDISSPEFKIKIPRHELTEISNVDVETQSGKTVIRLPSGSGAASPTGSAVDIRAGAISASGPELQGAGHSKLQVTMPGIKVGGSGVNVNAKGLDLGGRGGVQVPAVDISSSLGGRAVEVQGPSLESGDHGKIKFPTMKVPKFGVSTGREGQTPKAGLRVSAPEVSVGHKGGKPGLTIQAPQLEVSVPSANIEGLEGKLKGPQITGPSLEGDLGLKGAKPQGHIGVDASAPQIGGSITGPSVEVQAPDIDVQGPGSKLNVPKMKVPKFSVSGAKGEETGIDVTLPTGEVTVPGVSGDVSLPEIATGGLEGKMKGTKVKTPEMIIQKPKISMQDVDLSLGSPKLKGDIKVSAPGVQGDVKGPQVALKGSRVDIETPNLEGTLTGPRLGSPSGKTGTCRISMSEVDLNVAAPKVKGGVDVTLPRVEGKVKVPEVDVRGPKVDVSAPDVEAHGPEWNLKMPKMKMPTFSTPGAKGEGPDVHMTLPKGDISISGPKVNVEAPDVNLEGLGGKLKGPDVKLPDMSVKTPKISMPDVDLHVKGTKVKGEYDVTVPKLEGELKGPKVDIDAPDVDVHGPDWHLKMPKMKMPKFSVPGFKAEGPEVDVNLPKADVDISGPKIDVTAPDVSIEEPEGKLKGPKFKMPEMNIKVPKISMPDVDLHLKGPNVKGEYDVTMPKVESEIKVPDVELKSAKMDIDVPDVEVQGPDWHLKMPKMKMPKFSMPGFKAEGPEVDVNLPKADVDISGPKVGVEVPDVNIEGPEGKLKGPKFKMPEMNIKAPKISMPDVDLHMKGPKVKGEYDMTVPKLEGDLKGPKVDVSAPDVEMQGPDWNLKMPKIKMPKFSMPSLKGEGPEFDVNLSKANVDISAPKVDTNAPDLSLEGPEGKLKGPKFKMPEMHFRAPKMSLPDVDLDLKGPKMKGNVDISAPKIEGEMQVPDVDIRGPKVDIKAPDVEGQGLDWSLKIPKMKMPKFSMPSLKGEGPEVDVNLPKADVVVSGPKVDIEAPDVSLEGPEGKLKGPKFKMPEMHFKTPKISMPDVDLHLKGPKVKGDVDVSVPKVEGEMKVPDVEIKGPKMDIDAPDVEVQGPDWHLKMPKMKMPKFSMPGFKGEGREVDVNLPKADIDVSGPKVDVEVPDVSLEGPEGKLKGPKFKMPEMHFKAPKISMPDVDLNLKGPKLKGDVDVSLPEVEGEMKVPDVDIKGPKVDISAPDVDVHGPDWHLKMPKVKMPKFSMPGFKGEGPEVDVKLPKADVDVSGPKMDAEVPDVNIEGPDAKLKGPKFKMPEMSIKPQKISIPDVGLHLKGPKMKGDYDVTVPKVEGEIKAPDVDIKGPKVDINAPDVEVHGPDWHLKMPKVKMPKFSMPGFKGEGPEVDMNLPKADLGVSGPKVDIDVPDVNLEAPEGKLKGPKFKMPSMNIQTHKISMPDVGLNLKAPKLKTDVDVSLPKVEGDLKGPEIDVKAPKMDVNVGDIDIEGPEGKLKGPKFKMPEMHFKAPKISMPDVDLHLKGPKVKGDMDVSVPKVEGEMKVPDVDIKGPKVDIDAPDVEVHDPDWHLKMPKMKMPKFSMPGFKAEGPEVDVNLPKADIDVSGPSVDTDAPDLDIEGPEGKLKGSKFKMPKLNIKAPKVSMPDVDLNLKGPKLKGEIDASVPELEGDLRGPQVDVKGPFVEAEVPDVDLECPDAKLKGPKFKMPEMHFKAPKISMPDVDLHLKGPKVKGDADVSVPKLEGDLTGPSVGVEVPDVELECPDAKLKGPKFKMPDMHFKAPKISMPDVDLHLKGPKVKGDVDVSVPKLEGDLTGPSVGVEVPDVELECPDAKLKGPKFKMPEMHFKTPKISMPDVDLHLKGPKVKGDMDVSVPKVEGEMKVPDVDIKGPKMDIDAPDVDVHGPDWHLKMPKMKMPKFSMPGFKAEGPEVDVNLPKADVVVSGPKVDVEVPDVSLEGPEGKLKGPKLKMPEMHFKAPKISMPDVDLHLKGPKVKGDVDVSLPKLEGDLTGPSVDVEVPDVELECPDAKLKGPKFKMPEMHFKTPKISMPDVNLNLKGPKVKGDMDVSVPKVEGEMKVPDVDIRGPKVDIDAPDVDVHGPDWHLKMPKMKMPKFSMPGFKGEGPEVDVNLPKADVDVSGPKVDVEVPDVSLEGPEGKLKGPKFKMPEMHFKTPKISMPDVDFNLKGPKIKGDVDVSAPKLEGELKGPELDVKGPKLDADMPEVAVEGPNGKWKTPKFKMPDMHFKAPKISMPDLDLHLKSPKAKGEVDVDVPKLEGDLKGPHVDVSGPDIDIEGPEGKLKGPKFKMPDMHFKAPNISMPDVDLNLKGPKIKGDVDVSVPEVEGKLEVPDMNIRGPKVDVNAPDVQAPDWHLKMPKMKMPKFSMPGFKAEGPEVDVNLPKADVDISGPKVDIEGPDVNIEGPEGKLKGPKLKMPEMNIKAPKISMPDFDLHLKGPKVKGDVDVSLPKVEGDLKGPEVDIKGPKVDINAPDVGVQGPDWHLKMPKVKMPKFSMPGFKGEGPDGDVKLPKADIDVSGPKVDIEGPDVNIEGPEGKLKGPKFKMPEMNIKAPKISMPDIDLNLKGPKVKGDVDVSLPKVEGDLKGPEVDIKGPKVDIDAPDVDVHGPDWHLKMPKIKMPKISMPGFKGEGPDVDVNLPKADIDVSGPKVDVECPDVNIEGPEGKWKSPKFKMPEMHFKTPKISMPDIDLNLTGPKIKGDVDVTGPKVEGDLKGPEVDLKGPKVDIDVPDVNVQGPDWHLKMPKMKMPKFSMPGFKAEGPEVDVNLPKADVDVSGPKVDVEGPDVNIEGPEGKLKGPKFKMPEMNIKAPKIPMPDFDLHLKGPKVKGDVDISLPKVEGDLKGPEVDIRGPQVDIDVPDVGVQGPDWHLKMPKVKMPKFSMPGFKGEGPDVDVNLPKADLDVSGPKVDIDVPDVNIEGPEGKLKGPKFKMPEMNIKAPKISMPDIDLNLKGPKVKGDMDVSLPKVEGDMKVPDVDIKGPKVDINAPDVDVQGPDWHLKMPKIKMPKISMPGFKGEGPEVDVNLPKADLDVSGPKVDVDVPDVNIEGPDAKLKGPKFKMPEMNIKAPKISMPDLDLNLKGPKMKGEVDVSLANVEGDLKGPALDIKGPKIDVDAPDIDIHGPDAKLKGPKLKMPDMHVNMPKISMPEIDLNLKGSKLKGDVDVSGPKLEGDIKAPSLDIKGPEVDVSGPKLNIEGKSKKSRFKLPKFNFSGSKVQTPEVDVKGKKPDIDITGPKVDINAPDVEVQGKVKGSKFKMPFLSISSPKVSMPDVELNLKSPKVKGDLDIAGPNLEGDFKGPKVDIKAPEVNLNAPDVDVHGPDWNLKMPKMKMPKFSVSGLKAEGPDVAVDLPKGDINIEGPSMNIEGPDLNVEGPEGGLKGPKFKMPDMNIKAPKISMPDIDLNLKGPKVKGDVDISLPKLEGDLKGPEVDIKGPKVDINAPDVDVHGPDWHLKMPKVKMPKFSMPGFKGEGPEVDVTLPKADIDISGPNVDVDVPDVNIEGPDAKLKGPKFKMPEMNIKAPKISMPDFDLNLKGPKMKGDVVVSLPKVEGDLKGPEVDIKGPKVDIDTPDINIEGSEGKFKGPKFKIPEMHLKAPKISMPDIDLNLKGPKVKGDVDVSLPKMEGDLKGPEVDIKGPKVDINAPDVDVQGPDWHLKMPKVKMPKFSMPGFKGEGPDVDVNLPKADLDVSGPKVDIDVPDVNIEGPEGKLKGPKFKMPEMNIKAPKISMPDIDLNLKGPKVKGDMDVSLPKVEGDMQVPDLDIKGPKVDINAPDVDVRGPDWHLKMPKIKMPKISMPGFKGEGPEVDVNLPKADLDVSGPKVDVDVPDVNIEGPDAKLKGPKFKMPEMNIKAPKISMPDFDLHLKGPKVKGDVDVSLPKMEGDLKAPEVDIKGPKVDIDAPDVDVHGPDWHLKMPKVKMPKFSMPGFKGEGPEVDVNLPKADIDVSGPKVDIDTPDIDIHGPEGKLKGPKFKMPDLHLKAPKISMPEVDLNLKGPKMKGDVDVSLPKVEGDLKGPEVDIKGPKVDIDVPDVDVQGPDWHLKMPKVKMPKFSMPGFKGEGPDVDVNLPKADLDVSGPKVDIDVPDVNIEGPDAKLKGPKFKMPEMNIKAPKISMPDFDLHLKGPKVKGDVDVSLPKVEGDLKGPEVDIKGPKVDIDAPDVDVHGPDWHLKMPKVKMPKFSMPGFKGEGPDVDVTLPKADIEISGPKVDIDAPDVSIEGPDAKLKGPKFKMPEMNIKAPKISMPDIDFNLKGPKVKGDVDVSLPKVEGDLKGPEIDIKGPSLDIDTPDVNIEGPEGKLKGPKFKMPEMNIKAPKISMPDFDLHLKGPKVKGDVDVSLPKVESDLKGPEVDIEGPEGKLKGPKFKMPDVHFKSPQISMSDIDLNLKGPKIKGDMDISVPKLEGDLKGPKVDVKGPKVGIDTPDIDIHGPEGKLKGPKFKMPDLHLKAPKISMPEVDLNLKGPKVKGDMDISLPKVEGDLKGPEVDIRDPKVDIDVPDVDVQGPDWHLKMPKVKMPKFSMPGFKGEGPDVDVNLPKADIDVSGPKVDVDVPDVNIEGPDAKLKGPKFKMPEMSIKAPKISMPDIDLNLKGPKVKGDVDVTLPKVEGDLKGPEADIKGPKVDINTPDVDVHGPDWHLKMPKVKMPKFSMPGFKGEGPDVDVSLPKADIDVSGPKVDVDIPDVNIEGPDAKLKGPKFKMPEINIKAPKISIPDVDLDLKGPKVKGDFDVSVPKVEGTLKGPEVDLKGPRLDFEGPDAKLSGPSLKMPSLEISAPKVTAPDVDLHLKAPKIGFSGPKLEGGEVDLKGPKVEAPSLDVHMDSPDINIEGPDVKIPKFKKPKFGFGAKSPKADIKSPSLDVTVPEAELNLETPEISVGGKGKKSKFKMPKIHMSGPKIKAKKQGFDLNVPGGEIDASLKAPDVDVNIAGPDAALKVDVKSPKTKKTMFGKMYFPDVEFDIKSPKFKAEAPLPSPKLEGELQAPDLELSLPAIHVEGLDIKAKAPKVKMPDVDISVPKIEGDLKGPKVQANLGAPDINIEGLDAKVKTPSFGISAPQVSIPDVNVNLKGPKIKGDVPSVGLEGPDVDLQGPEAKIKFPKFSMPKIGIPGVKMEGGGAEVHAQLPSLEGDLRGPDVKLEGPDVSLKGPGVDLPSVNLSMPKVSGPDLDLNLKGPSLKGDLDASVPSMKVHAPGLNLSGVGGKMQVGGDGVKVPGIDATTKLNVGAPDVTLRGPSLQGDLAVSGDIKCPKVSVGAPDLSLEASEGSIKLPKMKLPQFGISTPGSDLHVNAKGPQVSGELKGPGVDVNLKGPRISAPNVDFNLEGPKVKGSLGATGEIKGPTVGGGLPGIGVQGLEGNLQMPGIKSSGCDVNLPGVNVKLPTGQISGPEIKGGLKGSEVGFHGAAPDISVKGPAFNMASPESDFGINLKGPKIKGGADVSGGVSAPDISLGEGHLSVKGSGGEWKGPQVSSALNLDTSKFAGGLHFSGPKVEGGVKGGQIGLQAPGLSVSGPQGHLESGSGKVTFPKMKIPKFTFSGRELVGREMGVDVHFPKAEASIQAGAGDGEWEESEVKLKKSKIKMPKFNFSKPKGKGGVTGSPEASISGSKGDLKSSKASLGSLEGEAEAEASSPKGKFSLFKSKKPRHRSNSFSDEREFSGPSTPTGTLEFEGGEVSLEGGKVKGKHGKLKFGTFGGLGSKSKGHYEVTGSDDETGKLQGSGVSLASKKSRLSSSSSNDSGNKVGIQLPEVELSVSTKKE.

Position 1 is an N-acetylmethionine (M1). A PDZ domain is found at 9-90 (ELLLPNWQGS…TVGLKLHRKG (82 aa)). Phosphoserine occurs at positions 41 and 93. At T101 the chain carries Phosphothreonine. S115 is modified (phosphoserine). K134 participates in a covalent cross-link: Glycyl lysine isopeptide (Lys-Gly) (interchain with G-Cter in SUMO1); alternate. K134 is covalently cross-linked (Glycyl lysine isopeptide (Lys-Gly) (interchain with G-Cter in SUMO2); alternate). Residue S135 is modified to Phosphoserine. T158 is subject to Phosphothreonine. At S177 the chain carries Phosphoserine. K181 participates in a covalent cross-link: Glycyl lysine isopeptide (Lys-Gly) (interchain with G-Cter in SUMO2). Residues S210, S212, and S216 each carry the phosphoserine modification. A Phosphothreonine modification is found at T218. A phosphoserine mark is found at S220 and S256. R270 carries the post-translational modification Omega-N-methylarginine. The segment at 314–347 (FGVSTGREGQTPKAGLRVSAPEVSVGHKGGKPGL) is disordered. A phosphoserine mark is found at S332, S337, S379, and S470. T490 carries the post-translational modification Phosphothreonine. S511 is subject to Phosphoserine. Residues 545–564 (TPNLEGTLTGPRLGSPSGKT) are disordered. A phosphothreonine mark is found at T551 and T553. A phosphoserine mark is found at S559, S570, S572, and S658. Residues K712 and K763 each participate in a glycyl lysine isopeptide (Lys-Gly) (interchain with G-Cter in SUMO2) cross-link. Phosphoserine is present on residues S793 and S819. K891 participates in a covalent cross-link: Glycyl lysine isopeptide (Lys-Gly) (interchain with G-Cter in SUMO2). Residue K942 forms a Glycyl lysine isopeptide (Lys-Gly) (interchain with G-Cter in SUMO1) linkage. A Glycyl lysine isopeptide (Lys-Gly) (interchain with G-Cter in SUMO1); alternate cross-link involves residue K961. K961 participates in a covalent cross-link: Glycyl lysine isopeptide (Lys-Gly) (interchain with G-Cter in SUMO2); alternate. The tract at residues 970 to 993 (KLEGDLKGPKVDVSAPDVEMQGPD) is disordered. S1010, S1042, S1068, and S1170 each carry phosphoserine. At T1192 the chain carries Phosphothreonine. S1196 carries the phosphoserine modification. The residue at position 1208 (K1208) is an N6-methyllysine. Phosphoserine occurs at positions 1286 and 1298. Positions 1414–1438 (SGPKMDAEVPDVNIEGPDAKLKGPK) are disordered. Residues S1580 and S1654 each carry the phosphoserine modification. The residue at position 1666 (K1666) is an N6-methyllysine. Residue K1726 forms a Glycyl lysine isopeptide (Lys-Gly) (interchain with G-Cter in SUMO2) linkage. The tract at residues 1741-1766 (IDVSGPSVDTDAPDLDIEGPEGKLKG) is disordered. S1856 carries the phosphoserine modification. Position 1868 is an N6-methyllysine (K1868). At S1923 the chain carries Phosphoserine. K1935 is modified (N6-methyllysine). T1986 carries the post-translational modification Phosphothreonine. Residue S1990 is modified to Phosphoserine. K2002 is subject to N6-methyllysine. Residue K2062 forms a Glycyl lysine isopeptide (Lys-Gly) (interchain with G-Cter in SUMO2) linkage. A phosphoserine mark is found at S2092 and S2118. K2130 carries the N6-methyllysine modification. K2132 is covalently cross-linked (Glycyl lysine isopeptide (Lys-Gly) (interchain with G-Cter in SUMO1)). S2138 is subject to Phosphoserine. T2181 bears the Phosphothreonine mark. At S2287 the chain carries Phosphoserine. Phosphothreonine is present on T2309. S2397 carries the post-translational modification Phosphoserine. Residues 2410–2419 (KLEGDLKGPH) are compositionally biased toward basic and acidic residues. A disordered region spans residues 2410–2439 (KLEGDLKGPHVDVSGPDIDIEGPEGKLKGP). A Glycyl lysine isopeptide (Lys-Gly) (interchain with G-Cter in SUMO2) cross-link involves residue K2524. The segment at 2542-2567 (SGPKVDIEGPDVNIEGPEGKLKGPKL) is disordered. A Glycyl lysine isopeptide (Lys-Gly) (interchain with G-Cter in SUMO1) cross-link involves residue K2575. S2580 is subject to Phosphoserine. Residue K2594 forms a Glycyl lysine isopeptide (Lys-Gly) (interchain with G-Cter in SUMO1) linkage. S2600 carries the post-translational modification Phosphoserine. A compositionally biased stretch (basic and acidic residues) spans 2610-2619 (GPEVDIKGPK). Disordered regions lie at residues 2610–2633 (GPEV…QGPD) and 2667–2695 (IDVS…GPKF). A Phosphoserine modification is found at S2670. K2703 is covalently cross-linked (Glycyl lysine isopeptide (Lys-Gly) (interchain with G-Cter in SUMO1)). S2708 carries the post-translational modification Phosphoserine. K2722 participates in a covalent cross-link: Glycyl lysine isopeptide (Lys-Gly) (interchain with G-Cter in SUMO1). A phosphoserine mark is found at S2728 and S2798. T2832 and T2845 each carry phosphothreonine. The tract at residues 2853–2882 (VDVTGPKVEGDLKGPEVDLKGPKVDIDVPD) is disordered. The segment covering 2860–2878 (VEGDLKGPEVDLKGPKVDI) has biased composition (basic and acidic residues). Residue K2908 forms a Glycyl lysine isopeptide (Lys-Gly) (interchain with G-Cter in SUMO2) linkage. The tract at residues 2921–2951 (ADVDVSGPKVDVEGPDVNIEGPEGKLKGPKF) is disordered. K2959 participates in a covalent cross-link: Glycyl lysine isopeptide (Lys-Gly) (interchain with G-Cter in SUMO1). At S3054 the chain carries Phosphoserine. A Glycyl lysine isopeptide (Lys-Gly) (interchain with G-Cter in SUMO1) cross-link involves residue K3087. A Phosphoserine modification is found at S3092. Residues 3122 to 3131 (VPDVDIKGPK) show a composition bias toward basic and acidic residues. The tract at residues 3122–3145 (VPDVDIKGPKVDINAPDVDVQGPD) is disordered. S3182 is modified (phosphoserine). A Glycyl lysine isopeptide (Lys-Gly) (interchain with G-Cter in SUMO1) cross-link involves residue K3215. Phosphoserine occurs at positions 3220, 3362, 3409, 3412, 3426, and 3544. K3667 is covalently cross-linked (Glycyl lysine isopeptide (Lys-Gly) (interchain with G-Cter in SUMO1)). Residues 3702–3714 (GPEVDIKGPKVDI) are compositionally biased toward basic and acidic residues. The disordered stretch occupies residues 3702–3730 (GPEVDIKGPKVDIDTPDINIEGSEGKFKG). T3716 is subject to Phosphothreonine. S3746 is subject to Phosphoserine. K3760 is covalently cross-linked (Glycyl lysine isopeptide (Lys-Gly) (interchain with G-Cter in SUMO1)). The interval 3763 to 3799 (VDVSLPKMEGDLKGPEVDIKGPKVDINAPDVDVQGPD) is disordered. Residue S3766 is modified to Phosphoserine. Basic and acidic residues predominate over residues 3770–3785 (MEGDLKGPEVDIKGPK). S3836 carries the post-translational modification Phosphoserine. K3869 is covalently cross-linked (Glycyl lysine isopeptide (Lys-Gly) (interchain with G-Cter in SUMO1)). A phosphoserine mark is found at S3874 and S3964. K3997 participates in a covalent cross-link: Glycyl lysine isopeptide (Lys-Gly) (interchain with G-Cter in SUMO1). S4002 is modified (phosphoserine). K4016 is covalently cross-linked (Glycyl lysine isopeptide (Lys-Gly) (interchain with G-Cter in SUMO1)). Phosphoserine occurs at positions 4022 and 4092. 2 disordered regions span residues 4093–4117 (GPKV…GPKF) and 4147–4169 (VDVS…KGPK). T4100 is subject to Phosphothreonine. The span at 4103 to 4117 (IDIHGPEGKLKGPKF) shows a compositional bias: basic and acidic residues. A Phosphoserine modification is found at S4150. The segment covering 4154–4169 (VEGDLKGPEVDIKGPK) has biased composition (basic and acidic residues). S4220 is modified (phosphoserine). Residue K4253 forms a Glycyl lysine isopeptide (Lys-Gly) (interchain with G-Cter in SUMO1) linkage. The residue at position 4258 (S4258) is a Phosphoserine. Residue K4272 forms a Glycyl lysine isopeptide (Lys-Gly) (interchain with G-Cter in SUMO1) linkage. 2 positions are modified to phosphoserine: S4278 and S4360. Glycyl lysine isopeptide (Lys-Gly) (interchain with G-Cter in SUMO1) cross-links involve residues K4381 and K4400. Phosphoserine is present on residues S4406 and S4425. A disordered region spans residues 4416–4447 (GPEIDIKGPSLDIDTPDVNIEGPEGKLKGPKF). T4430 is subject to Phosphothreonine. K4455 is covalently cross-linked (Glycyl lysine isopeptide (Lys-Gly) (interchain with G-Cter in SUMO1)). Position 4460 is a phosphoserine (S4460). K4474 is covalently cross-linked (Glycyl lysine isopeptide (Lys-Gly) (interchain with G-Cter in SUMO1)). A phosphoserine mark is found at S4480 and S4486. The tract at residues 4488 to 4508 (LKGPEVDIEGPEGKLKGPKFK) is disordered. Residues S4516 and S4520 each carry the phosphoserine modification. Disordered regions lie at residues 4550-4581 (GPKV…GPKF) and 4611-4631 (MDIS…DIRD). Position 4564 is a phosphothreonine (T4564). Basic and acidic residues-rich tracts occupy residues 4567 to 4581 (IDIH…GPKF) and 4618 to 4631 (VEGD…DIRD). Phosphoserine is present on residues S4684 and S4722. A compositionally biased stretch (basic and acidic residues) spans 4746–4761 (VEGDLKGPEADIKGPK). The disordered stretch occupies residues 4746–4768 (VEGDLKGPEADIKGPKVDINTPD). A Phosphothreonine modification is found at T4766. S4812 carries the phosphoserine modification. The tract at residues 4880–4904 (GPEVDLKGPRLDFEGPDAKLSGPSL) is disordered. Over residues 4881 to 4896 (PEVDLKGPRLDFEGPD) the composition is skewed to basic and acidic residues. A phosphoserine mark is found at S4900, S4903, S4908, S4953, and S4960. The Nuclear localization signal signature appears at 4971-4979 (KIPKFKKPK). Residues S4986 and S4993 each carry the phosphoserine modification. The residue at position 5009 (T5009) is a Phosphothreonine. 2 consecutive short sequence motifs (nuclear localization signal) follow at residues 5019–5027 (KKSKFKMPK) and 5034–5039 (KIKAKK). Phosphoserine occurs at positions 5077, 5099, 5110, 5125, 5261, 5318, 5332, 5369, 5386, 5393, and 5400. T5415 bears the Phosphothreonine mark. Phosphoserine is present on residues S5448, S5519, S5530, S5552, S5577, and S5620. A Glycyl lysine isopeptide (Lys-Gly) (interchain with G-Cter in SUMO2) cross-link involves residue K5623. S5641 bears the Phosphoserine mark. Residues 5706–5716 (KLKKSKIKMPK) carry the Nuclear localization signal motif. A disordered region spans residues 5716-5890 (KFNFSKPKGK…VELSVSTKKE (175 aa)). Phosphoserine is present on residues S5731, S5739, S5749, S5752, S5762, and S5763. The short motif at 5772–5779 (KSKKPRHR) is the Nuclear localization signal element. Phosphoserine occurs at positions 5780, 5782, 5790, and 5793. Phosphothreonine is present on residues T5794 and T5824. Residues S5830 and S5841 each carry the phosphoserine modification. Phosphothreonine is present on T5845. 3 positions are modified to phosphoserine: S5851, S5857, and S5863. Residues 5854–5870 (SLASKKSRLSSSSSNDS) show a composition bias toward low complexity.

As to quaternary structure, interacts with DYSF; the interaction is direct and Ca(2+)-independent.

It is found in the nucleus. Its function is as follows. May be required for neuronal cell differentiation. The protein is Neuroblast differentiation-associated protein AHNAK (AHNAK) of Homo sapiens (Human).